The following is a 408-amino-acid chain: 3-phosphoshikimate 1-carboxyvinyltransferase (408 aa).

Residues lysine 10, serine 11, and arginine 15 each contribute to the 3-phosphoshikimate site. Residue lysine 10 participates in phosphoenolpyruvate binding. 2 residues coordinate phosphoenolpyruvate: glycine 79 and arginine 107. Residues serine 150, serine 151, glutamine 152, serine 179, glutamate 297, and histidine 324 each coordinate 3-phosphoshikimate. Glutamine 152 is a phosphoenolpyruvate binding site. Glutamate 297 acts as the Proton acceptor in catalysis. Residues arginine 328, arginine 369, and lysine 394 each contribute to the phosphoenolpyruvate site.

This sequence belongs to the EPSP synthase family. Monomer.

It localises to the cytoplasm. The enzyme catalyses 3-phosphoshikimate + phosphoenolpyruvate = 5-O-(1-carboxyvinyl)-3-phosphoshikimate + phosphate. It participates in metabolic intermediate biosynthesis; chorismate biosynthesis; chorismate from D-erythrose 4-phosphate and phosphoenolpyruvate: step 6/7. Catalyzes the transfer of the enolpyruvyl moiety of phosphoenolpyruvate (PEP) to the 5-hydroxyl of shikimate-3-phosphate (S3P) to produce enolpyruvyl shikimate-3-phosphate and inorganic phosphate. The protein is 3-phosphoshikimate 1-carboxyvinyltransferase of Corynebacterium efficiens (strain DSM 44549 / YS-314 / AJ 12310 / JCM 11189 / NBRC 100395).